A 231-amino-acid polypeptide reads, in one-letter code: GFP-like fluorescent chromoprotein FP506 (231 aa).

Positions 66–68 form a cross-link, 5-imidazolinone (Asn-Gly); that stretch reads NYG. At Tyr67 the chain carries 2,3-didehydrotyrosine.

Belongs to the GFP family. In terms of processing, contains a chromophore consisting of modified amino acid residues. The chromophore is formed by autocatalytic backbone condensation between Xaa-N and Gly-(N+2), and oxidation of Tyr-(N+1) to didehydrotyrosine. Maturation of the chromophore requires nothing other than molecular oxygen. The precise stereochemistry of the tyrosine has not been determined. As to expression, tentacle and oral disk.

Functionally, pigment protein that is yellow-green in color. The sequence is that of GFP-like fluorescent chromoprotein FP506 from Zoanthus sp. (Green polyp).